The primary structure comprises 227 residues: Cytochrome c oxidase subunit 2 (227 aa).

The Mitochondrial intermembrane portion of the chain corresponds to 1 to 14 (MAHAAQVGLQDATS). Residues 15–45 (PIMEELIIFHDHALMIIFLICFLVLYALFLT) form a helical membrane-spanning segment. Residues 46–59 (LTTKLTNTSISDAQ) lie on the Mitochondrial matrix side of the membrane. Residues 60–87 (EMETVWTILPAIILVLIALPSLRILYMT) form a helical membrane-spanning segment. Over 88-227 (DEVNDPSFTI…IFEMGPVFTL (140 aa)) the chain is Mitochondrial intermembrane. Residues histidine 161, cysteine 196, glutamate 198, cysteine 200, histidine 204, and methionine 207 each coordinate Cu cation. Glutamate 198 contributes to the Mg(2+) binding site.

It belongs to the cytochrome c oxidase subunit 2 family. Component of the cytochrome c oxidase (complex IV, CIV), a multisubunit enzyme composed of 14 subunits. The complex is composed of a catalytic core of 3 subunits MT-CO1, MT-CO2 and MT-CO3, encoded in the mitochondrial DNA, and 11 supernumerary subunits COX4I, COX5A, COX5B, COX6A, COX6B, COX6C, COX7A, COX7B, COX7C, COX8 and NDUFA4, which are encoded in the nuclear genome. The complex exists as a monomer or a dimer and forms supercomplexes (SCs) in the inner mitochondrial membrane with NADH-ubiquinone oxidoreductase (complex I, CI) and ubiquinol-cytochrome c oxidoreductase (cytochrome b-c1 complex, complex III, CIII), resulting in different assemblies (supercomplex SCI(1)III(2)IV(1) and megacomplex MCI(2)III(2)IV(2)). Found in a complex with TMEM177, COA6, COX18, COX20, SCO1 and SCO2. Interacts with TMEM177 in a COX20-dependent manner. Interacts with COX20. Interacts with COX16. Requires Cu cation as cofactor.

The protein resides in the mitochondrion inner membrane. It catalyses the reaction 4 Fe(II)-[cytochrome c] + O2 + 8 H(+)(in) = 4 Fe(III)-[cytochrome c] + 2 H2O + 4 H(+)(out). Component of the cytochrome c oxidase, the last enzyme in the mitochondrial electron transport chain which drives oxidative phosphorylation. The respiratory chain contains 3 multisubunit complexes succinate dehydrogenase (complex II, CII), ubiquinol-cytochrome c oxidoreductase (cytochrome b-c1 complex, complex III, CIII) and cytochrome c oxidase (complex IV, CIV), that cooperate to transfer electrons derived from NADH and succinate to molecular oxygen, creating an electrochemical gradient over the inner membrane that drives transmembrane transport and the ATP synthase. Cytochrome c oxidase is the component of the respiratory chain that catalyzes the reduction of oxygen to water. Electrons originating from reduced cytochrome c in the intermembrane space (IMS) are transferred via the dinuclear copper A center (CU(A)) of subunit 2 and heme A of subunit 1 to the active site in subunit 1, a binuclear center (BNC) formed by heme A3 and copper B (CU(B)). The BNC reduces molecular oxygen to 2 water molecules using 4 electrons from cytochrome c in the IMS and 4 protons from the mitochondrial matrix. The chain is Cytochrome c oxidase subunit 2 (MT-CO2) from Pan troglodytes (Chimpanzee).